Here is a 339-residue protein sequence, read N- to C-terminus: 3-isopropylmalate dehydrogenase (339 aa).

The substrate site is built by arginine 87, arginine 97, arginine 124, and aspartate 214. Residues aspartate 214, aspartate 238, and aspartate 242 each contribute to the Mg(2+) site. 274-286 provides a ligand contact to NAD(+); the sequence is GSAPDIAGQGIAD.

It belongs to the isocitrate and isopropylmalate dehydrogenases family. LeuB type 2 subfamily. Homodimer. The cofactor is Mg(2+). Mn(2+) is required as a cofactor.

Its subcellular location is the cytoplasm. The enzyme catalyses (2R,3S)-3-isopropylmalate + NAD(+) = 4-methyl-2-oxopentanoate + CO2 + NADH. It functions in the pathway amino-acid biosynthesis; L-leucine biosynthesis; L-leucine from 3-methyl-2-oxobutanoate: step 3/4. In terms of biological role, catalyzes the oxidation of 3-carboxy-2-hydroxy-4-methylpentanoate (3-isopropylmalate) to 3-carboxy-4-methyl-2-oxopentanoate. The product decarboxylates to 4-methyl-2 oxopentanoate. This is 3-isopropylmalate dehydrogenase from Mycobacterium marinum (strain ATCC BAA-535 / M).